Reading from the N-terminus, the 64-residue chain is uncharacterized protein (64 aa).

This is an uncharacterized protein from Methanothermobacter thermautotrophicus (strain ATCC 29096 / DSM 1053 / JCM 10044 / NBRC 100330 / Delta H) (Methanobacterium thermoautotrophicum).